A 304-amino-acid polypeptide reads, in one-letter code: Protein Largen (304 aa).

Residues 1–13 are compositionally biased toward polar residues; the sequence is MSAKSKGNPSSSC. 4 disordered regions span residues 1 to 27, 66 to 91, 114 to 160, and 239 to 304; these read MSAK…TKVK, QLED…TASS, LTVL…GGLP, and HPPG…TTTV. The stretch at 33–70 forms a coiled coil; it reads IVEDLELVLGDLKDVAKELKEVVDQIDTLTSDLQLEDE. Over residues 77-91 the composition is skewed to low complexity; sequence TDTLNSSSSGTTASS. Pro residues-rich tracts occupy residues 120-129, 239-261, and 277-289; these read PNPPPPPPRL, HPPG…PPFP, and PIRP…PTAP.

Functionally, regulator of cell size that promotes cell size increase independently of mTOR and Hippo signaling pathways. Acts by stimulating the translation of specific mRNAs, including those encoding proteins affecting mitochondrial functions. Increases mitochondrial mass and respiration. This Homo sapiens (Human) protein is Protein Largen (PRR16).